The following is a 374-amino-acid chain: Chaperone protein DnaJ (374 aa).

Residues Asp4–Gly68 enclose the J domain. The segment at Gly132–Thr214 adopts a CR-type zinc-finger fold. Zn(2+) contacts are provided by Cys145, Cys148, Cys162, Cys165, Cys188, Cys191, Cys202, and Cys205. 4 CXXCXGXG motif repeats span residues Cys145–Gly152, Cys162–Gly169, Cys188–Gly195, and Cys202–Gly209.

This sequence belongs to the DnaJ family. As to quaternary structure, homodimer. Requires Zn(2+) as cofactor.

The protein localises to the cytoplasm. Functionally, participates actively in the response to hyperosmotic and heat shock by preventing the aggregation of stress-denatured proteins and by disaggregating proteins, also in an autonomous, DnaK-independent fashion. Unfolded proteins bind initially to DnaJ; upon interaction with the DnaJ-bound protein, DnaK hydrolyzes its bound ATP, resulting in the formation of a stable complex. GrpE releases ADP from DnaK; ATP binding to DnaK triggers the release of the substrate protein, thus completing the reaction cycle. Several rounds of ATP-dependent interactions between DnaJ, DnaK and GrpE are required for fully efficient folding. Also involved, together with DnaK and GrpE, in the DNA replication of plasmids through activation of initiation proteins. In Trichodesmium erythraeum (strain IMS101), this protein is Chaperone protein DnaJ.